Consider the following 174-residue polypeptide: Eukaryotic translation elongation factor 1 epsilon-1 (174 aa).

Residue alanine 2 is modified to N-acetylalanine. Residues alanine 2–serine 56 are N-terminal. Residues histidine 50–serine 173 form the GST C-terminal domain. Residues lysine 57 to serine 63 form a linker region. Positions threonine 64–tyrosine 152 are C-terminal. At lysine 138 the chain carries N6-acetyllysine. A coiled-coil region spans residues proline 153–leucine 169.

Part of a multisubunit complex that groups tRNA ligases for Arg (RARS1), Asp (DARS1), Gln (QARS1), Ile (IARS1), Leu (LARS1), Lys (KARS1), Met (MARS1) the bifunctional ligase for Glu and Pro (EPRS1) and the auxiliary subunits AIMP1/p43, AIMP2/p38 and EEF1E1/p18. Can interact simultaneously with MARS1 and EPRS1. Forms a linear complex that contains MARS1, EEF1E1, EPRS1 and AIMP2 that is at the core of the multisubunit complex. Interacts with ATM and ATR. The interaction with ATM, which takes place independently of TP53, is induced by DNA damage that may occur during genotoxic stress or cell growth. The interaction with ATR is enhanced by UV irradiation.

It is found in the cytoplasm. The protein localises to the nucleus. Its function is as follows. Positive modulator of ATM response to DNA damage. The polypeptide is Eukaryotic translation elongation factor 1 epsilon-1 (Eef1e1) (Mus musculus (Mouse)).